The sequence spans 551 residues: Chaperonin GroEL (551 aa).

Residues 30–33 (TLGP), lysine 51, 87–91 (DGTTT), glycine 415, 478–480 (NAA), and aspartate 494 contribute to the ATP site.

Belongs to the chaperonin (HSP60) family. As to quaternary structure, forms a cylinder of 14 subunits composed of two heptameric rings stacked back-to-back. Interacts with the co-chaperonin GroES.

It is found in the cytoplasm. It carries out the reaction ATP + H2O + a folded polypeptide = ADP + phosphate + an unfolded polypeptide.. Its function is as follows. Together with its co-chaperonin GroES, plays an essential role in assisting protein folding. The GroEL-GroES system forms a nano-cage that allows encapsulation of the non-native substrate proteins and provides a physical environment optimized to promote and accelerate protein folding. This Syntrophotalea carbinolica (strain DSM 2380 / NBRC 103641 / GraBd1) (Pelobacter carbinolicus) protein is Chaperonin GroEL.